A 129-amino-acid polypeptide reads, in one-letter code: M-zodatoxin-Lt8l (129 aa).

Positions 1–20 (MKYFVVXXALVAAFACIAES) are cleaved as a signal peptide. A propeptide spanning residues 21–60 (KPAESEHELAEVEEENELADLEDAVWLEDLADLSDLEETR) is cleaved from the precursor.

The protein belongs to the cationic peptide 06 (cytoinsectotoxin) family. Expressed by the venom gland.

The protein resides in the secreted. Functionally, insecticidal, cytolytic and antimicrobial peptide. Forms voltage-dependent, ion-permeable channels in membranes. At high concentration causes cell membrane lysis. The polypeptide is M-zodatoxin-Lt8l (cit 1-12) (Lachesana tarabaevi (Spider)).